Reading from the N-terminus, the 246-residue chain is Small ribosomal subunit protein uS2 (246 aa).

It belongs to the universal ribosomal protein uS2 family.

The chain is Small ribosomal subunit protein uS2 from Stutzerimonas stutzeri (strain A1501) (Pseudomonas stutzeri).